The sequence spans 967 residues: RNA polymerase-associated protein RapA (967 aa).

The 171-residue stretch at 163–333 (EVGQRHAPRV…FARLRLLDPN (171 aa)) folds into the Helicase ATP-binding domain. 176-183 (DEVGLGKT) provides a ligand contact to ATP. Residues 279-282 (DEAH) carry the DEAH box motif. The Helicase C-terminal domain occupies 489–643 (RVEWLLNYLT…TCPTGRTIYD (155 aa)).

The protein belongs to the SNF2/RAD54 helicase family. RapA subfamily. In terms of assembly, interacts with the RNAP. Has a higher affinity for the core RNAP than for the holoenzyme. Its ATPase activity is stimulated by binding to RNAP.

In terms of biological role, transcription regulator that activates transcription by stimulating RNA polymerase (RNAP) recycling in case of stress conditions such as supercoiled DNA or high salt concentrations. Probably acts by releasing the RNAP, when it is trapped or immobilized on tightly supercoiled DNA. Does not activate transcription on linear DNA. Probably not involved in DNA repair. This is RNA polymerase-associated protein RapA from Pectobacterium carotovorum subsp. carotovorum (strain PC1).